Reading from the N-terminus, the 377-residue chain is Chaperone protein DnaJ (377 aa).

Positions 4–69 constitute a J domain; the sequence is DYYEALGVER…QKRAAYDRFG (66 aa). Residues 135–213 form a CR-type zinc finger; sequence GKTAQIRVPT…CHGQGRVTQE (79 aa). Cysteine 148, cysteine 151, cysteine 165, cysteine 168, cysteine 187, cysteine 190, cysteine 201, and cysteine 204 together coordinate Zn(2+). CXXCXGXG motif repeat units lie at residues 148–155, 165–172, 187–194, and 201–208; these read CDECSGSG, CTMCSGSG, CPTCNGRG, and CGKCHGQG.

Belongs to the DnaJ family. As to quaternary structure, homodimer. Zn(2+) is required as a cofactor.

It is found in the cytoplasm. Participates actively in the response to hyperosmotic and heat shock by preventing the aggregation of stress-denatured proteins and by disaggregating proteins, also in an autonomous, DnaK-independent fashion. Unfolded proteins bind initially to DnaJ; upon interaction with the DnaJ-bound protein, DnaK hydrolyzes its bound ATP, resulting in the formation of a stable complex. GrpE releases ADP from DnaK; ATP binding to DnaK triggers the release of the substrate protein, thus completing the reaction cycle. Several rounds of ATP-dependent interactions between DnaJ, DnaK and GrpE are required for fully efficient folding. Also involved, together with DnaK and GrpE, in the DNA replication of plasmids through activation of initiation proteins. This chain is Chaperone protein DnaJ, found in Brucella anthropi (strain ATCC 49188 / DSM 6882 / CCUG 24695 / JCM 21032 / LMG 3331 / NBRC 15819 / NCTC 12168 / Alc 37) (Ochrobactrum anthropi).